A 492-amino-acid chain; its full sequence is Catalase isozyme 1 (492 aa).

Active-site residues include H65 and N138. Y348 contacts heme.

The protein belongs to the catalase family. Homotetramer. Heme serves as cofactor. Scutella, milky endosperm of immature kernels, leaves and epicotyls.

Its subcellular location is the peroxisome. It catalyses the reaction 2 H2O2 = O2 + 2 H2O. Its function is as follows. Occurs in almost all aerobically respiring organisms and serves to protect cells from the toxic effects of hydrogen peroxide. The polypeptide is Catalase isozyme 1 (CAT1) (Zea mays (Maize)).